The chain runs to 170 residues: Myosin regulatory light chain 11 (170 aa).

At A2 the chain carries N,N,N-trimethylalanine. A phosphoserine mark is found at S16 and S17. T26 and T36 each carry phosphothreonine. The region spanning T26–L61 is the EF-hand 1 domain. D39, N41, D43, and D50 together coordinate Ca(2+). S76 is subject to Phosphoserine. EF-hand domains follow at residues D96–R131 and F132–K167. The residue at position 102 (T102) is a Phosphothreonine.

Myosin is a hexamer of 2 heavy chains and 4 light chains. Post-translationally, n,N,N-trimethylalanine found in this myosin light chain would not have been detected in the N-terminal tryptic peptide in PubMed:863872 and PubMed:352892 because it would remain trimethylated and ninhydrin negative after hydrolysis.

In terms of biological role, myosin regulatory subunit that plays an essential role to maintain muscle integrity during early development. Plays a role in muscle contraction. This is Myosin regulatory light chain 11 (MYL11) from Oryctolagus cuniculus (Rabbit).